Reading from the N-terminus, the 162-residue chain is NADH-quinone oxidoreductase subunit I (162 aa).

4Fe-4S ferredoxin-type domains are found at residues 54 to 83 (RRYE…IESE) and 93 to 122 (TRYD…ETQI). [4Fe-4S] cluster-binding residues include C63, C66, C69, C73, C102, C105, C108, and C112.

This sequence belongs to the complex I 23 kDa subunit family. NDH-1 is composed of 14 different subunits. Subunits NuoA, H, J, K, L, M, N constitute the membrane sector of the complex. It depends on [4Fe-4S] cluster as a cofactor.

The protein localises to the cell inner membrane. The catalysed reaction is a quinone + NADH + 5 H(+)(in) = a quinol + NAD(+) + 4 H(+)(out). Functionally, NDH-1 shuttles electrons from NADH, via FMN and iron-sulfur (Fe-S) centers, to quinones in the respiratory chain. The immediate electron acceptor for the enzyme in this species is believed to be ubiquinone. Couples the redox reaction to proton translocation (for every two electrons transferred, four hydrogen ions are translocated across the cytoplasmic membrane), and thus conserves the redox energy in a proton gradient. The polypeptide is NADH-quinone oxidoreductase subunit I (Burkholderia cenocepacia (strain ATCC BAA-245 / DSM 16553 / LMG 16656 / NCTC 13227 / J2315 / CF5610) (Burkholderia cepacia (strain J2315))).